Here is a 282-residue protein sequence, read N- to C-terminus: Shikimate dehydrogenase (NADP(+)) (282 aa).

Residues 15-17 (SKS) and threonine 62 contribute to the shikimate site. Lysine 66 acts as the Proton acceptor in catalysis. Shikimate is bound by residues asparagine 87 and aspartate 103. NADP(+) contacts are provided by residues 127-131 (GAGGA), 151-156 (NRTHTK), and methionine 220. Tyrosine 222 provides a ligand contact to shikimate. Glycine 244 is an NADP(+) binding site.

The protein belongs to the shikimate dehydrogenase family. As to quaternary structure, homodimer.

The enzyme catalyses shikimate + NADP(+) = 3-dehydroshikimate + NADPH + H(+). The protein operates within metabolic intermediate biosynthesis; chorismate biosynthesis; chorismate from D-erythrose 4-phosphate and phosphoenolpyruvate: step 4/7. Functionally, involved in the biosynthesis of the chorismate, which leads to the biosynthesis of aromatic amino acids. Catalyzes the reversible NADPH linked reduction of 3-dehydroshikimate (DHSA) to yield shikimate (SA). The chain is Shikimate dehydrogenase (NADP(+)) from Shewanella putrefaciens (strain CN-32 / ATCC BAA-453).